The chain runs to 389 residues: Indole-3-acetate monooxygenase (389 aa).

This sequence belongs to the HpaH/HsaA monooxygenase family.

It carries out the reaction (indol-3-yl)acetate + NADH + O2 + H(+) = 2-hydroxy-(1H-indol-3-yl)acetate + NAD(+) + H2O. It catalyses the reaction indole + NADH + O2 + H(+) = indoxyl + NAD(+) + H2O. Involved in the degradation of the plant hormone indole-3-acetic acid (IAA). Catalyzes the first step of the pathway, the conversion of IAA to 2-hydroxy-IAA (2-OH-IAA). Can also convert indole to indoxyl, which spontaneously dimerizes in the presence of oxygen to form the blue pigment indigo. The sequence is that of Indole-3-acetate monooxygenase from Pseudomonas putida (Arthrobacter siderocapsulatus).